Here is a 187-residue protein sequence, read N- to C-terminus: Lysozyme 3 (187 aa).

Residues 1–18 (MNGLFLFCVATTAALAYG) form the signal peptide. Residues 68-183 (TGIVSQQCLQ…WSHVHAQGCS (116 aa)) form the I-type lysozyme domain. 6 cysteine pairs are disulfide-bonded: C75–C151, C80–C86, C91–C100, C113–C133, C123–C129, and C147–C165. The active-site Proton donor is the E83. The Nucleophile role is filled by D94. Substrate is bound at residue 106-112 (KEGYWHD). Substrate-binding positions include Y137 and 158-160 (HNG).

Highest levels of expression detected in the digestive glands. Lower levels in the mantle, labial palps, gills and style-midgut sac, and lowest levels detected in the hemocytes. Not detected in the gonads.

The protein localises to the secreted. The enzyme catalyses Hydrolysis of (1-&gt;4)-beta-linkages between N-acetylmuramic acid and N-acetyl-D-glucosamine residues in a peptidoglycan and between N-acetyl-D-glucosamine residues in chitodextrins.. Functionally, has antibacterial activity against the Gram-negative bacterium E.coli. No antibacterial activity detected against the Gram-negative bacterium V.vulnificus. The sequence is that of Lysozyme 3 from Crassostrea virginica (Eastern oyster).